Reading from the N-terminus, the 418-residue chain is Histidine--tRNA ligase (418 aa).

It belongs to the class-II aminoacyl-tRNA synthetase family.

The protein localises to the cytoplasm. It carries out the reaction tRNA(His) + L-histidine + ATP = L-histidyl-tRNA(His) + AMP + diphosphate + H(+). This chain is Histidine--tRNA ligase, found in Methanococcus maripaludis (strain C7 / ATCC BAA-1331).